Consider the following 211-residue polypeptide: N-(5'-phosphoribosyl)anthranilate isomerase (211 aa).

It belongs to the TrpF family.

It carries out the reaction N-(5-phospho-beta-D-ribosyl)anthranilate = 1-(2-carboxyphenylamino)-1-deoxy-D-ribulose 5-phosphate. It functions in the pathway amino-acid biosynthesis; L-tryptophan biosynthesis; L-tryptophan from chorismate: step 3/5. This is N-(5'-phosphoribosyl)anthranilate isomerase from Zymomonas mobilis subsp. mobilis (strain ATCC 31821 / ZM4 / CP4).